A 132-amino-acid chain; its full sequence is Insulin-like 3 (132 aa).

A signal peptide spans 1–24; it reads MSPRPLAWALVLLGAALAVALALG. 3 cysteine pairs are disulfide-bonded: cysteine 36–cysteine 117, cysteine 48–cysteine 130, and cysteine 116–cysteine 121. The propeptide at 61–104 is c peptide like; it reads VAGGDRELLQWLEGRHLHGQVSDGDPMLVLVPQALPQASLHHHH.

Belongs to the insulin family. As to quaternary structure, heterodimer of a B chain and an A chain linked by two disulfide bonds. In terms of tissue distribution, more strongly expressed in testis than in ovary.

It is found in the secreted. Its function is as follows. Seems to play a role in testicular function. May be a trophic hormone with a role in testicular descent in fetal life. Is a ligand for LGR8 receptor. This chain is Insulin-like 3 (INSL3), found in Canis lupus familiaris (Dog).